The following is a 684-amino-acid chain: Cyclic nucleotide-gated channel alpha-1 (684 aa).

Topologically, residues 1–161 (MKTNIINTWH…PSGNTYYNWL (161 aa)) are cytoplasmic. The disordered stretch occupies residues 34–145 (ACSSFSDDDN…TKEKKEEEKK (112 aa)). Residues 39–54 (SDDDNGSLSEESENED) are compositionally biased toward acidic residues. The span at 105-145 (SKADDKNENKKDPEKKKKKEKEKEKKKKEEKTKEKKEEEKK) shows a compositional bias: basic and acidic residues. Residues 162-183 (FCITLPVMYNWTMIIARACFDE) traverse the membrane as a helical segment. Over 184 to 193 (LQSDYLEYWL) the chain is Extracellular. The helical transmembrane segment at 194–214 (IFDYVSDVVYLADMFVRTRTG) threads the bilayer. Residues 215 to 239 (YLEQGLLVKDRMKLIEKYKANLQFK) are Cytoplasmic-facing. Residues 240–258 (LDVLSVIPTDLLYIKFGWN) form a helical membrane-spanning segment. The Extracellular segment spans residues 259 to 263 (YPEIR). The helical transmembrane segment at 264-282 (LNRLLRISRMFEFFQRTET) threads the bilayer. Topologically, residues 283 to 289 (RTNYPNI) are cytoplasmic. The ion conduction pathway stretch occupies residues 287–395 (PNIFRISNLV…GNIGSMISNM (109 aa)). Residues 290-313 (FRISNLVMYIVIIIHWNACVYYSI) traverse the membrane as a helical segment. Over 314–336 (SKAIGFGNDTWVYPDVNDPEFGR) the chain is Extracellular. The N-linked (GlcNAc...) asparagine glycan is linked to N321. Transmembrane regions (helical) follow at residues 337 to 371 (LARK…IFVV) and 372 to 396 (VDFL…SNMN). The selectivity filter stretch occupies residues 354–357 (TIGE). The segment at 397–473 (AARAEFQSRV…DTLKKVRIFA (77 aa)) is C-linker. Residues 397-684 (AARAEFQSRV…ESELTESLQD (288 aa)) are Cytoplasmic-facing. Residues 477–597 (AGLLVELVLK…EEKGRQILMK (121 aa)) are cyclic nucleotide-binding domain. 4 residues coordinate 3',5'-cyclic GMP: G537, S540, R553, and T554. R553 and T554 together coordinate 3',5'-cyclic AMP. Positions 615-669 (LEEKVTRMEGSVDLLQTRFARILAEYESMQQKLKQRLTKVEKFLKPLIETEFSAL) form a coiled coil.

This sequence belongs to the cyclic nucleotide-gated cation channel (TC 1.A.1.5) family. CNGA1 subfamily. As to quaternary structure, forms heterotetrameric channels composed of CNGA1 and CNGB1 subunits with 3:1 stoichiometry. May also form cyclic nucleotide-activated homotetrameric channels, that are efficiently activated by saturating cGMP, but poorly activated by saturating cAMP compared to the heterotetramer with CNGB1. The channel binds Ca(2+)-bound CALM1 via CaM1 and CaM2 regions of the CNGB1 subunit; this interaction modulates the affinity of the channel for cNMPs in response to intracellular Ca(2+) levels. Rod cells in the retina and inner medulla of kidney.

It is found in the cell membrane. The enzyme catalyses Ca(2+)(in) = Ca(2+)(out). It catalyses the reaction Na(+)(in) = Na(+)(out). The catalysed reaction is K(+)(in) = K(+)(out). It carries out the reaction NH4(+)(in) = NH4(+)(out). The enzyme catalyses Rb(+)(in) = Rb(+)(out). It catalyses the reaction Li(+)(in) = Li(+)(out). The catalysed reaction is Cs(+)(in) = Cs(+)(out). Functionally, pore-forming subunit of the rod cyclic nucleotide-gated channel. Mediates rod photoresponses at dim light converting transient changes in intracellular cGMP levels into electrical signals. In the dark, cGMP levels are high and keep the channel open enabling a steady inward current carried by Na(+) and Ca(2+) ions that leads to membrane depolarization and neurotransmitter release from synaptic terminals. Upon photon absorption cGMP levels decline leading to channel closure and membrane hyperpolarization that ultimately slows neurotransmitter release and signals the presence of light, the end point of the phototransduction cascade. Conducts cGMP- and cAMP-gated ion currents, with permeability for monovalent and divalent cations. The selectivity for Ca(2+) over Na(+) increases with cGMP concentrations, whereas the selectivity among monovalent ions is independent of the cGMP levels. This is Cyclic nucleotide-gated channel alpha-1 (Cnga1) from Mus musculus (Mouse).